A 317-amino-acid chain; its full sequence is tRNA-dihydrouridine(20a/20b) synthase [NAD(P)+]-like (317 aa).

FMN contacts are provided by residues 33 to 35 (PMV) and glutamine 87. Residue cysteine 116 is the Proton donor of the active site. FMN-binding positions include lysine 158, histidine 186, 216-218 (NGD), and 240-241 (AR).

It belongs to the Dus family. Dus4 subfamily. Requires FMN as cofactor.

It carries out the reaction 5,6-dihydrouridine(20a) in tRNA + NADP(+) = uridine(20a) in tRNA + NADPH + H(+). The catalysed reaction is 5,6-dihydrouridine(20a) in tRNA + NAD(+) = uridine(20a) in tRNA + NADH + H(+). The enzyme catalyses 5,6-dihydrouridine(20b) in tRNA + NAD(+) = uridine(20b) in tRNA + NADH + H(+). It catalyses the reaction 5,6-dihydrouridine(20b) in tRNA + NADP(+) = uridine(20b) in tRNA + NADPH + H(+). Functionally, catalyzes the synthesis of dihydrouridine, a modified base found in the D-loop of most tRNAs. The sequence is that of tRNA-dihydrouridine(20a/20b) synthase [NAD(P)+]-like (DUS4L) from Homo sapiens (Human).